A 618-amino-acid chain; its full sequence is Pyocin-S1 (618 aa).

It belongs to the colicin/pyosin nuclease family. Purified pyocin S1 makes up a complex of the two (large and small) proteins. The large protein, but not the pyocin complex, shows in vitro DNase activity.

Its function is as follows. Causes breakdown of chromosomal DNA as well as complete inhibition of lipid synthesis in sensitive cells. This Pseudomonas aeruginosa protein is Pyocin-S1 (pys1).